Reading from the N-terminus, the 425-residue chain is Calreticulin-1 (425 aa).

The signal sequence occupies residues 1–22 (MAKLNPKFISLILFALVVIVSA). An N-linked (GlcNAc...) asparagine glycan is attached at asparagine 59. A disulfide bridge links cysteine 108 with cysteine 140. Positions 112, 114, 131, and 138 each coordinate an alpha-D-glucoside. Residue asparagine 154 is glycosylated (N-linked (GlcNAc...) asparagine). A run of 7 repeats spans residues 194–205 (KQTGSLYSDWDL), 213–224 (DPSAKKPEDWDD), 230–241 (DPEDTKPAGYDD), 248–259 (DTDAKKPEDWDD), 263–273 (GEWTAPTIPNP), 277–287 (GEWKPKKIKNP), and 291–301 (GKWKAPMIDNP). Residues 194 to 259 (KQTGSLYSDW…DAKKPEDWDD (66 aa)) are 4 X approximate repeats. 2 stretches are compositionally biased toward basic and acidic residues: residues 213–235 (DPSAKKPEDWDDKEYIPDPEDTK) and 241–255 (DIPKEIPDTDAKKPE). A disordered region spans residues 213 to 281 (DPSAKKPEDW…NPEYNGEWKP (69 aa)). The 3 X approximate repeats stretch occupies residues 263–301 (GEWTAPTIPNPEYNGEWKPKKIKNPAYKGKWKAPMIDNP). An alpha-D-glucoside is bound at residue glutamate 321. A compositionally biased stretch (basic and acidic residues) spans 348–378 (EETWGKHKDAEKAAFDEAEKKREEEESKDAP). The tract at residues 348-425 (EETWGKHKDA…EETDAAHDEL (78 aa)) is disordered. Acidic residues predominate over residues 379-398 (AESDAEEEAEDDDNEGDDSD). A phosphoserine mark is found at serine 381 and serine 397. An N-linked (GlcNAc...) asparagine glycan is attached at asparagine 399. A compositionally biased stretch (basic and acidic residues) spans 399–412 (NESKSEETKEAEET). Positions 422 to 425 (HDEL) match the Prevents secretion from ER motif.

This sequence belongs to the calreticulin family.

It localises to the endoplasmic reticulum lumen. Its function is as follows. Molecular calcium-binding chaperone promoting folding, oligomeric assembly and quality control in the ER via the calreticulin/calnexin cycle. This lectin may interact transiently with almost all of the monoglucosylated glycoproteins that are synthesized in the ER. This Arabidopsis thaliana (Mouse-ear cress) protein is Calreticulin-1 (CRT1).